A 555-amino-acid chain; its full sequence is Oxamate carbamoyltransferase subunit AllF (555 aa).

Belongs to the AllF family. As to quaternary structure, the OXTCase is composed of 3 subunits, AllF, AllG and AllH. Requires Mg(2+) as cofactor.

The enzyme catalyses oxamate + carbamoyl phosphate = N-carbamoyl-2-oxoglycine + phosphate. It participates in nitrogen metabolism; (S)-allantoin degradation. Its function is as follows. Component of a carbamoyltransferase involved in the anaerobic nitrogen utilization via the assimilation of allantoin. Catalyzes the conversion of oxalurate (N-carbamoyl-2-oxoglycine) to oxamate and carbamoyl phosphate. The sequence is that of Oxamate carbamoyltransferase subunit AllF from Escherichia coli (strain K12).